The primary structure comprises 135 residues: uncharacterized protein (135 aa).

The segment at 1 to 80 is disordered; that stretch reads MRSSSLPGAR…QRGSCASANA (80 aa). Residues 54-65 show a composition bias toward gly residues; the sequence is GARGGGRRGWGG.

This is an uncharacterized protein from Homo sapiens (Human).